A 546-amino-acid polypeptide reads, in one-letter code: Oncoprotein-induced transcript 3 protein (546 aa).

The N-terminal stretch at 1–16 (MPLSLLLACLFTTVTL) is a signal peptide. N-linked (GlcNAc...) asparagine glycans are attached at residues Asn89 and Asn116. Residues 182-222 (DENECEHNNGGCSEICVNLKNSHRCACGVGRVLRSDGKTCE) enclose the EGF-like; calcium-binding domain. Disulfide bonds link Cys186–Cys197, Cys193–Cys206, and Cys208–Cys221. The ZP domain maps to 261 to 516 (TCQVPVLCKS…SRCAQGCHRR (256 aa)). Asn299 carries an N-linked (GlcNAc...) asparagine glycan. A disordered region spans residues 524–546 (DEDSAGLQSQTLTGGPISIDWEE).

The protein localises to the nucleus envelope. Functionally, may be involved in hepatocellular function and development. The polypeptide is Oncoprotein-induced transcript 3 protein (Oit3) (Rattus norvegicus (Rat)).